We begin with the raw amino-acid sequence, 255 residues long: 14-3-3-like protein GF14 psi (255 aa).

Serine 66 is modified (phosphoserine). Threonine 162 is modified (phosphothreonine). Position 189 is a phosphoserine (serine 189). A phosphothreonine mark is found at threonine 210 and threonine 238.

Belongs to the 14-3-3 family. As to quaternary structure, component of a DNA binding complex that binds to the G box. Interacts with IDH3, AGT3, GLN1-1, GLN1-2, GLN1-4, SAM1, SAM2, MDH1, METK3 and MDH2. Binds to 1-aminocyclopropane-1-carboxylate synthases (ACS) such as ACS2, ACS5, ACS6, ACS8, and ACS11. Interacts with FD. Interacts with DREB1A and DREB1B in the nucleus. Interacts with CINV1.

It is found in the cytoplasm. Its subcellular location is the nucleus. Its function is as follows. Is associated with a DNA binding complex that binds to the G box, a well-characterized cis-acting DNA regulatory element found in plant genes. Involved in the regulation of nutrient metabolism. Reciprocal negative transcription regulation of miR396. Negative regulator of constitutive freezing tolerance and cold acclimation by controlling cold-induced gene expression partially through an ethylene (ET)-dependent pathway; prevents ethylene (ET) biosynthesis, probably by binding 1-aminocyclopropane-1-carboxylate synthases (ACS) to reduce their stability, thus contributing to establish adequate ET levels under both standard and low-temperature conditions. This chain is 14-3-3-like protein GF14 psi, found in Arabidopsis thaliana (Mouse-ear cress).